Consider the following 458-residue polypeptide: Gamma aminobutyrate transaminase 2 (458 aa).

Residue 114–115 (GS) coordinates pyridoxal 5'-phosphate. Substrate is bound at residue Tyr147. A pyridoxal 5'-phosphate-binding site is contributed by Asp254. Substrate is bound at residue Lys283. At Lys283 the chain carries N6-(pyridoxal phosphate)lysine.

It belongs to the class-III pyridoxal-phosphate-dependent aminotransferase family. In terms of tissue distribution, expressed in leaves, roots, stems, flowers and fruits. Expressed in carpels, but not in stamens.

The protein resides in the cytoplasm. The enzyme catalyses 4-aminobutanoate + pyruvate = succinate semialdehyde + L-alanine. It carries out the reaction 4-aminobutanoate + glyoxylate = succinate semialdehyde + glycine. In terms of biological role, transaminase that degrades gamma-amino butyric acid (GABA) and uses pyruvate or glyoxylate as amino-group acceptor. Cannot use beta-alanine, ornithine, acetylornithine, serine, glycine, asparagine, glutamine, glutamate, valine, leucine, isoleucine, methionine, phenylalanine, histidine, lysine, arginine, aspartate, threonine, tyrosine, tryptophan, proline, or cysteine as amino donors. May be responsible for establishing the GABA gradient in the carpel. The chain is Gamma aminobutyrate transaminase 2 (GABA-TP2) from Solanum lycopersicum (Tomato).